A 699-amino-acid polypeptide reads, in one-letter code: Elongation factor G (699 aa).

The tr-type G domain occupies 8-289 (ERYRNIGISA…AVVEYMPAPT (282 aa)). GTP contacts are provided by residues 17 to 24 (AHIDAGKT), 88 to 92 (DTPGH), and 142 to 145 (NKMD).

This sequence belongs to the TRAFAC class translation factor GTPase superfamily. Classic translation factor GTPase family. EF-G/EF-2 subfamily.

It is found in the cytoplasm. Its function is as follows. Catalyzes the GTP-dependent ribosomal translocation step during translation elongation. During this step, the ribosome changes from the pre-translocational (PRE) to the post-translocational (POST) state as the newly formed A-site-bound peptidyl-tRNA and P-site-bound deacylated tRNA move to the P and E sites, respectively. Catalyzes the coordinated movement of the two tRNA molecules, the mRNA and conformational changes in the ribosome. In Variovorax paradoxus (strain S110), this protein is Elongation factor G.